The sequence spans 242 residues: Mannosyl-3-phosphoglycerate phosphatase (242 aa).

Asp8 acts as the Nucleophile in catalysis. Positions 8, 10, 169, and 204 each coordinate Mg(2+).

This sequence belongs to the HAD-like hydrolase superfamily. MPGP family. The cofactor is Mg(2+).

It localises to the cytoplasm. The enzyme catalyses 2-O-(alpha-D-mannosyl)-3-phosphoglycerate + H2O = (2R)-2-O-(alpha-D-mannosyl)-glycerate + phosphate. The protein operates within carbohydrate biosynthesis; 2-(alpha-D-mannosyl)-D-glycerate biosynthesis; 2-(alpha-D-mannosyl)-D-glycerate from GDP-alpha-D-mannose (MPG route): step 2/2. Its function is as follows. Hydrolyzes mannosyl-3-phosphoglycerate (MPG) to form the osmolyte mannosylglycerate (MG). This is Mannosyl-3-phosphoglycerate phosphatase from Pyrococcus furiosus (strain ATCC 43587 / DSM 3638 / JCM 8422 / Vc1).